Reading from the N-terminus, the 717-residue chain is UV-stimulated scaffold protein A (717 aa).

A VHS-like region spans residues 2 to 145 (DQKLSQLIEE…HFLKHTKKVD (144 aa)). Residues 169-199 (KIHRESADRAKREMEEMYDEIECCLTEVENC) are a coiled coil. Disordered stretches follow at residues 231–253 (PLSPDLATPRESGLSGPQDEEQP), 277–301 (QTAMKDSSRDEDEPSDPDDFLRSHG), 389–418 (PGRGQRSRTEALEDSEDEDQDFVEVPEKEG), and 479–503 (CLSSPSPSSTRVLPGPEEAQKQAER). Phosphoserine occurs at positions 284, 291, and 403. Composition is skewed to acidic residues over residues 285–294 (RDEDEPSDPD) and 400–412 (LEDSEDEDQDFVE). Lys416 is covalently cross-linked (Glycyl lysine isopeptide (Lys-Gly) (interchain with G-Cter in ubiquitin)). Residues 479–489 (CLSSPSPSSTR) show a composition bias toward polar residues. Residues 571–598 (QHKCRALRPNGRLCERQDRLKCPFHGKI) form a UVSSA-type zinc finger. The Zn(2+) site is built by Cys574, Cys584, Cys592, and His595. Residues 595–672 (HGKIIPRDDK…HPNLTDLRER (78 aa)) are disordered. Residues 599 to 618 (IPRDDKGQPLNPEDRAREQR) are compositionally biased toward basic and acidic residues. Positions 652-664 (SSKKGKGKKKKHP) are enriched in basic residues.

This sequence belongs to the UVSSA family. In terms of assembly, interacts with the elongating form of RNA polymerase II (RNA pol IIo) during transcription stress. Interacts with the TFIIH complex during transcription stress. Interacts with ERCC6. Interacts with ERCC8. Interacts with USP7. In terms of processing, monoubiquitinated at Lys-416 in response to transcription stress; this promotes efficient transfer of TFIIH to stalled RNA polymerase II.

It localises to the chromosome. Functionally, factor involved in transcription-coupled nucleotide excision repair (TC-NER), a mechanism that rapidly removes RNA polymerase II-blocking lesions from the transcribed strand of active genes. Acts as a key adapter that promotes recruitment of factors involved in TC-NER. Facilitates the ubiquitination of the elongating form of RNA polymerase II (RNA pol IIo) at DNA damage sites, thereby promoting RNA pol IIo backtracking and access by the TC-NER machinery to lesion sites. Also promotes stabilization of ERCC6/CSB by recruiting deubiquitinating enzyme USP7 to TC-NER complexes, preventing UV-induced degradation of ERCC6 by the proteasome. Mediates the recruitment of the TFIIH complex and other factors that are required for nucleotide excision repair to RNA polymerase II. Also required to inactivate stalled RNA polymerase II by blocking the access of TCEA1/TFIIS, thereby preventing reactivation of RNA polymerase II. Not involved in processing oxidative damage. The chain is UV-stimulated scaffold protein A (Uvssa) from Mus musculus (Mouse).